The following is a 167-amino-acid chain: HVA22-like protein b (167 aa).

Transmembrane regions (helical) follow at residues 18 to 38 (VIAG…RAIE), 47 to 67 (QWLT…TFFR), and 68 to 88 (LLEW…WLVL).

This sequence belongs to the DP1 family. Predominantly expressed in flower buds.

Its subcellular location is the membrane. The protein is HVA22-like protein b (HVA22B) of Arabidopsis thaliana (Mouse-ear cress).